A 416-amino-acid polypeptide reads, in one-letter code: LL-diaminopimelate aminotransferase (416 aa).

Substrate contacts are provided by Tyr-15 and Gly-42. Pyridoxal 5'-phosphate contacts are provided by residues Tyr-72, 108–109 (SK), Tyr-132, Asn-187, Tyr-218, and 246–248 (SFS). Residues Lys-109, Tyr-132, and Asn-187 each coordinate substrate. Lys-249 is subject to N6-(pyridoxal phosphate)lysine. Pyridoxal 5'-phosphate contacts are provided by Arg-257 and Asn-292. Substrate contacts are provided by Asn-292 and Arg-388.

This sequence belongs to the class-I pyridoxal-phosphate-dependent aminotransferase family. LL-diaminopimelate aminotransferase subfamily. As to quaternary structure, homodimer. The cofactor is pyridoxal 5'-phosphate.

The enzyme catalyses (2S,6S)-2,6-diaminopimelate + 2-oxoglutarate = (S)-2,3,4,5-tetrahydrodipicolinate + L-glutamate + H2O + H(+). It participates in amino-acid biosynthesis; L-lysine biosynthesis via DAP pathway; LL-2,6-diaminopimelate from (S)-tetrahydrodipicolinate (aminotransferase route): step 1/1. Its function is as follows. Involved in the synthesis of meso-diaminopimelate (m-DAP or DL-DAP), required for both lysine and peptidoglycan biosynthesis. Catalyzes the direct conversion of tetrahydrodipicolinate to LL-diaminopimelate. This is LL-diaminopimelate aminotransferase from Synechococcus sp. (strain JA-2-3B'a(2-13)) (Cyanobacteria bacterium Yellowstone B-Prime).